Here is a 260-residue protein sequence, read N- to C-terminus: Isopentenyl phosphate kinase (260 aa).

An ATP-binding site is contributed by 6–10 (KLGGS). Position 55 (Gly-55) interacts with substrate. Gly-56 is a binding site for ATP. Positions 60 and 159 each coordinate substrate. The ATP site is built by Asp-180, Gly-217, and Lys-221.

Belongs to the isopentenyl phosphate kinase family. In terms of assembly, homodimer.

It catalyses the reaction isopentenyl phosphate + ATP = isopentenyl diphosphate + ADP. In terms of biological role, catalyzes the formation of isopentenyl diphosphate (IPP), the building block of all isoprenoids. Has no activity with farnesyl phosphate. This is Isopentenyl phosphate kinase from Methanocaldococcus jannaschii (strain ATCC 43067 / DSM 2661 / JAL-1 / JCM 10045 / NBRC 100440) (Methanococcus jannaschii).